A 513-amino-acid chain; its full sequence is Cytochrome P450 monooxygenase ARMGADRAFT_1018418 (513 aa).

Residues 1–21 (MTHASSAWFLAAVVIVTFIVV) form a helical membrane-spanning segment. Cys-435 contacts heme. Asn-442 carries an N-linked (GlcNAc...) asparagine glycan.

Belongs to the cytochrome P450 family. Heme serves as cofactor.

The protein localises to the membrane. Its pathway is secondary metabolite biosynthesis. Its function is as follows. Cytochrome P450 monooxygenase, part of the gene cluster that mediates the biosynthesis of melleolides, a range of antifungal and phytotoxic polyketide derivatives composed of an orsellinic acid (OA) moiety esterified to various sesquiterpene alcohols. The first step in melleolides biosynthesis is performed by the delta(6)-protoilludene synthase PRO1 which catalyzes the cyclization of farnesyl diphosphate to protoilludene. The orsellinic acid synthase armB produces OA by condensing acetyl-CoA with 3 malonyl-CoA units in a three-round chain elongation reaction folowed by a C2-C7 ring closure. ArmB further catalyzes the trans-esterification of OA to the various sesquiterpene alcohols resulting from the hydroxylation of protoilludene. The melleolides cluster also includes 5 cytochrome P450 monooxygenases, 4 NAD(+)-dependent oxidoreductases, one flavin-dependent oxidoreductase, and one O-methyltransferase. The cytochrome P450 monooxygenases may be involved in protoilludene hydroxylation to elaborate melleolides with multiple alcohol groups, such as melleolide D, which carries alcohol functionalities at C-4, C-5, C-10, and C-13. The role of the NAD(+)-dependent enzymes remains unknown. Numerous melleolides, including arnamial, show 5'-O-methylation of the aromatic moiety which may be catalyzed by the methyltransferase encoded in the cluster. The flavin-dependent oxidoreductase might represent the dehydrogenase yielding the aldehyde in position 1 of arnamial and other melleolides. Finally, several halogenase localized outside of the cluster, are able to catalyze the transfer of a single chlorine atom to the melleolide backbone, resulting in a 6'-chloromelleolide product. This chain is Cytochrome P450 monooxygenase ARMGADRAFT_1018418, found in Armillaria gallica (Bulbous honey fungus).